The primary structure comprises 334 residues: Glutaminase (334 aa).

Residues S76, N126, E170, N177, Y201, Y253, and V271 each coordinate substrate.

The protein belongs to the glutaminase family. As to quaternary structure, homotetramer.

It catalyses the reaction L-glutamine + H2O = L-glutamate + NH4(+). The polypeptide is Glutaminase (Trichormus variabilis (strain ATCC 29413 / PCC 7937) (Anabaena variabilis)).